We begin with the raw amino-acid sequence, 107 residues long: Integration host factor subunit alpha (107 aa).

It belongs to the bacterial histone-like protein family. Heterodimer of an alpha and a beta chain.

Its function is as follows. This protein is one of the two subunits of integration host factor, a specific DNA-binding protein that functions in genetic recombination as well as in transcriptional and translational control. This chain is Integration host factor subunit alpha, found in Mesorhizobium japonicum (strain LMG 29417 / CECT 9101 / MAFF 303099) (Mesorhizobium loti (strain MAFF 303099)).